Consider the following 183-residue polypeptide: TATA-box-binding protein (183 aa).

2 tandem repeats follow at residues 8–84 and 99–175.

It belongs to the TBP family.

In terms of biological role, general factor that plays a role in the activation of archaeal genes transcribed by RNA polymerase. Binds specifically to the TATA box promoter element which lies close to the position of transcription initiation. The polypeptide is TATA-box-binding protein (Methanosphaera stadtmanae (strain ATCC 43021 / DSM 3091 / JCM 11832 / MCB-3)).